The primary structure comprises 165 residues: NADPH-dependent 7-cyano-7-deazaguanine reductase (165 aa).

The Thioimide intermediate role is filled by Cys-56. Residue Asp-63 is the Proton donor of the active site. Substrate-binding positions include 78-80 (VES) and 97-98 (HE). Positions 163 and 165 each coordinate Mg(2+).

It belongs to the GTP cyclohydrolase I family. QueF type 1 subfamily. In terms of assembly, forms an asymmetric tunnel-fold homodecamer of two head-to-head facing pentamers, harboring 10 active sites at the intersubunit interfaces. It depends on Does not require a metal cofactor. as a cofactor.

Its subcellular location is the cytoplasm. It carries out the reaction 7-aminomethyl-7-carbaguanine + 2 NADP(+) = 7-cyano-7-deazaguanine + 2 NADPH + 3 H(+). It functions in the pathway tRNA modification; tRNA-queuosine biosynthesis. With respect to regulation, activity is strongly inhibited by Cu(2+) and Fe(3+). Its function is as follows. Catalyzes the NADPH-dependent reduction of 7-cyano-7-deazaguanine (preQ0) to 7-aminomethyl-7-deazaguanine (preQ1), a late step in the queuosine pathway. The sequence is that of NADPH-dependent 7-cyano-7-deazaguanine reductase (queF) from Bacillus subtilis (strain 168).